We begin with the raw amino-acid sequence, 106 residues long: Molt-inhibiting hormone (106 aa).

Positions M1–A29 are cleaved as a signal peptide. 3 disulfides stabilise this stretch: C36–C73, C53–C69, and C56–C82. An Alanine amide modification is found at A104. The propeptide occupies G105 to R106.

As to expression, sinus gland of the eyestalk.

It is found in the secreted. Functionally, inhibits Y-organs where molting hormone (ecdysteroid) is secreted. A molting cycle is initiated when MIH secretion diminishes or stops. The sequence is that of Molt-inhibiting hormone from Faxonius limosus (Spinycheek crayfish).